We begin with the raw amino-acid sequence, 239 residues long: Small ribosomal subunit protein uS3 (239 aa).

Residues I39–R107 form the KH type-2 domain. Over residues P212–E221 the composition is skewed to basic and acidic residues. Positions P212–R239 are disordered. Gly residues predominate over residues G230–R239.

The protein belongs to the universal ribosomal protein uS3 family. As to quaternary structure, part of the 30S ribosomal subunit. Forms a tight complex with proteins S10 and S14.

Its function is as follows. Binds the lower part of the 30S subunit head. Binds mRNA in the 70S ribosome, positioning it for translation. This is Small ribosomal subunit protein uS3 from Ruegeria sp. (strain TM1040) (Silicibacter sp.).